The chain runs to 490 residues: Bifunctional protein HldE (490 aa).

Residues 1-330 (MERKEIESLF…AEIGHAHPDS (330 aa)) form a ribokinase region. 205–208 (NRKE) contributes to the ATP binding site. Asp-275 is a catalytic residue. The tract at residues 356–490 (FTNGCFDLLH…EKIRTGSIKE (135 aa)) is cytidylyltransferase.

This sequence in the N-terminal section; belongs to the carbohydrate kinase PfkB family. The protein in the C-terminal section; belongs to the cytidylyltransferase family. As to quaternary structure, homodimer.

It catalyses the reaction D-glycero-beta-D-manno-heptose 7-phosphate + ATP = D-glycero-beta-D-manno-heptose 1,7-bisphosphate + ADP + H(+). The enzyme catalyses D-glycero-beta-D-manno-heptose 1-phosphate + ATP + H(+) = ADP-D-glycero-beta-D-manno-heptose + diphosphate. It functions in the pathway nucleotide-sugar biosynthesis; ADP-L-glycero-beta-D-manno-heptose biosynthesis; ADP-L-glycero-beta-D-manno-heptose from D-glycero-beta-D-manno-heptose 7-phosphate: step 1/4. The protein operates within nucleotide-sugar biosynthesis; ADP-L-glycero-beta-D-manno-heptose biosynthesis; ADP-L-glycero-beta-D-manno-heptose from D-glycero-beta-D-manno-heptose 7-phosphate: step 3/4. In terms of biological role, catalyzes the phosphorylation of D-glycero-D-manno-heptose 7-phosphate at the C-1 position to selectively form D-glycero-beta-D-manno-heptose-1,7-bisphosphate. Functionally, catalyzes the ADP transfer from ATP to D-glycero-beta-D-manno-heptose 1-phosphate, yielding ADP-D-glycero-beta-D-manno-heptose. The polypeptide is Bifunctional protein HldE (Geotalea uraniireducens (strain Rf4) (Geobacter uraniireducens)).